Here is a 156-residue protein sequence, read N- to C-terminus: Anaerobic nitrite reductase HB2 (156 aa).

The region spanning 2–151 is the Globin domain; that stretch reads GFTDKQEALV…LASAIKAEMH (150 aa). The short motif at 35–39 is the Homodimerization element; that stretch reads EIAPV. Heme b contacts are provided by serine 45, lysine 59, histidine 63, and histidine 98. The Homodimerization signature appears at 105 to 117; sequence DPHFEVVKEALLR.

This sequence belongs to the plant globin family. Homodimer. Heme b serves as cofactor.

Its subcellular location is the cytoplasm. It is found in the nucleus. The enzyme catalyses Fe(III)-heme b-[protein] + nitric oxide + H2O = Fe(II)-heme b-[protein] + nitrite + 2 H(+). Its function is as follows. Phytoglobin that reduces nitrite to nitric oxide (NO) under anoxic conditions (e.g. during flooding or in waterlogged soil). May not function as an oxygen storage or transport protein. Has an unusually high affinity for O(2) through an hexacoordinate heme iron because of a very low dissociation constant. The sequence is that of Anaerobic nitrite reductase HB2 from Solanum lycopersicum (Tomato).